The following is a 318-amino-acid chain: Tyrosine recombinase XerD (318 aa).

Residues 5–90 (PSDAKLTGLF…AMRHLYRFLL (86 aa)) enclose the Core-binding (CB) domain. The region spanning 111–310 (GLPKVLSIAD…VEERLKSLVR (200 aa)) is the Tyr recombinase domain. Active-site residues include Arg161, Lys185, His262, Arg265, and His288. Tyr297 serves as the catalytic O-(3'-phospho-DNA)-tyrosine intermediate.

Belongs to the 'phage' integrase family. XerD subfamily. In terms of assembly, forms a cyclic heterotetrameric complex composed of two molecules of XerC and two molecules of XerD.

The protein resides in the cytoplasm. Its function is as follows. Site-specific tyrosine recombinase, which acts by catalyzing the cutting and rejoining of the recombining DNA molecules. The XerC-XerD complex is essential to convert dimers of the bacterial chromosome into monomers to permit their segregation at cell division. It also contributes to the segregational stability of plasmids. The protein is Tyrosine recombinase XerD of Bradyrhizobium diazoefficiens (strain JCM 10833 / BCRC 13528 / IAM 13628 / NBRC 14792 / USDA 110).